The following is a 189-amino-acid chain: Tumor protein p53-inducible protein 11 (189 aa).

At 1–63 (MAGKQPPPLM…FAVREPLGLR (63 aa)) the chain is on the cytoplasmic side. Position 14 is a phosphoserine (S14). Residues 64-84 (VWQFLSAMLFSSVAIMALALP) form a helical membrane-spanning segment. Residues 85-108 (DQLYDAVFDGAEVTSKTPIRLYGG) lie on the Extracellular side of the membrane. Residues 109–129 (ALLSISLIMWNALYTAEKVII) traverse the membrane as a helical segment. Position 130 (R130) is a topological domain, cytoplasmic. A helical membrane pass occupies residues 131–151 (WTLLTEACYFGVQSLVVTATL). Over 152 to 155 (AETG) the chain is Extracellular. Residues 156–176 (LMSLGTVLLLASRLLFVIVSI) traverse the membrane as a helical segment. The Cytoplasmic segment spans residues 177–189 (YYYYQVGRKPKKV).

It localises to the membrane. This is Tumor protein p53-inducible protein 11 (Trp53i11) from Mus musculus (Mouse).